The following is a 367-amino-acid chain: Aurora kinase (367 aa).

Composition is skewed to polar residues over residues 1-29 and 37-48; these read MQRN…TSRI and HSPQQRNPNSKI. The disordered stretch occupies residues 1–52; that stretch reads MQRNSLVNIKLNANSPSKKTTTRPNTSRINKPWRISHSPQQRNPNSKIPSPV. S5 is subject to Phosphoserine; by autocatalysis. S76 carries the phosphoserine modification. In terms of domain architecture, Protein kinase spans 104–355; sequence FELGKKLGKG…LGDVKMHPWI (252 aa). ATP-binding positions include 110 to 118 and K133; that span reads LGKGKFGKV. D227 acts as the Proton acceptor in catalysis. T260 is subject to Phosphothreonine; by autocatalysis.

It belongs to the protein kinase superfamily. Ser/Thr protein kinase family. Aurora subfamily. As to quaternary structure, component of the CPC complex at least composed of IPL1, BIR1 and SLI15.

It is found in the nucleus. The protein localises to the cytoplasm. It localises to the cytoskeleton. Its subcellular location is the spindle. The protein resides in the chromosome. It is found in the centromere. The protein localises to the kinetochore. The catalysed reaction is L-seryl-[protein] + ATP = O-phospho-L-seryl-[protein] + ADP + H(+). The enzyme catalyses L-threonyl-[protein] + ATP = O-phospho-L-threonyl-[protein] + ADP + H(+). Its function is as follows. Component of the chromosomal passenger complex (CPC), a complex that acts as a key regulator of chromosome segregation and cytokinesis. Has a role in error-correction of aberrent kinetochore-microtubule attachments to ensure that sister kinetochores become bioriented and connect to opposite poles by promoting spindle assembly checkpoint signaling. Acts in opposition to the phosphatase PP1. Not required for kinetochore detachment from microtubules during replication of centromeric DNA. Phosphorylates histone H3 to form H3S10ph during mitosis and meiosis. Phosphorylates CNN1, which contributes to the enrichment of CNN1 on anaphase kinetochores. Phosphorylates RGD1. This Saccharomyces cerevisiae (strain ATCC 204508 / S288c) (Baker's yeast) protein is Aurora kinase (IPL1).